The sequence spans 209 residues: Large ribosomal subunit protein uL3 (209 aa).

The interval asparagine 127–methionine 166 is disordered.

This sequence belongs to the universal ribosomal protein uL3 family. In terms of assembly, part of the 50S ribosomal subunit. Forms a cluster with proteins L14 and L19.

In terms of biological role, one of the primary rRNA binding proteins, it binds directly near the 3'-end of the 23S rRNA, where it nucleates assembly of the 50S subunit. The chain is Large ribosomal subunit protein uL3 from Chlorobium phaeovibrioides (strain DSM 265 / 1930) (Prosthecochloris vibrioformis (strain DSM 265)).